The chain runs to 126 residues: UPF0102 protein BH12350 (126 aa).

It belongs to the UPF0102 family.

The polypeptide is UPF0102 protein BH12350 (Bartonella henselae (strain ATCC 49882 / DSM 28221 / CCUG 30454 / Houston 1) (Rochalimaea henselae)).